We begin with the raw amino-acid sequence, 698 residues long: DNA ligase (698 aa).

Residues 40–44 (DDVYD), 89–90 (SL), and Glu123 contribute to the NAD(+) site. Lys125 serves as the catalytic N6-AMP-lysine intermediate. Residues Arg146, Glu184, Lys300, and Lys324 each coordinate NAD(+). Zn(2+) is bound by residues Cys417, Cys420, Cys435, and Cys441. The BRCT domain occupies 618–698 (SSASPVAGKA…EWLALTGAAD (81 aa)).

It belongs to the NAD-dependent DNA ligase family. LigA subfamily. It depends on Mg(2+) as a cofactor. The cofactor is Mn(2+).

The enzyme catalyses NAD(+) + (deoxyribonucleotide)n-3'-hydroxyl + 5'-phospho-(deoxyribonucleotide)m = (deoxyribonucleotide)n+m + AMP + beta-nicotinamide D-nucleotide.. Its function is as follows. DNA ligase that catalyzes the formation of phosphodiester linkages between 5'-phosphoryl and 3'-hydroxyl groups in double-stranded DNA using NAD as a coenzyme and as the energy source for the reaction. It is essential for DNA replication and repair of damaged DNA. The chain is DNA ligase from Paramagnetospirillum magneticum (strain ATCC 700264 / AMB-1) (Magnetospirillum magneticum).